Consider the following 131-residue polypeptide: Small ribosomal subunit protein uS8 (131 aa).

This sequence belongs to the universal ribosomal protein uS8 family. In terms of assembly, part of the 30S ribosomal subunit. Contacts proteins S5 and S12.

Its function is as follows. One of the primary rRNA binding proteins, it binds directly to 16S rRNA central domain where it helps coordinate assembly of the platform of the 30S subunit. This Sulfurimonas denitrificans (strain ATCC 33889 / DSM 1251) (Thiomicrospira denitrificans (strain ATCC 33889 / DSM 1251)) protein is Small ribosomal subunit protein uS8.